Reading from the N-terminus, the 141-residue chain is Hemoglobin subunit alpha (141 aa).

The Globin domain maps to 1–141 (VLSEADKSNV…VSTVLTSKYR (141 aa)). Position 58 (His58) interacts with O2. His87 contributes to the heme b binding site.

The protein belongs to the globin family. Heterotetramer of two alpha chains and two beta chains. When oxygenated in vitro, exists virtually only in polymeric form. When deoxygenated, forms tetramers, octamers and larger polymers. In terms of tissue distribution, red blood cells.

Functionally, involved in oxygen transport from the lung to the various peripheral tissues. In Paleosuchus palpebrosus (Cuvier's smooth-fronted caiman), this protein is Hemoglobin subunit alpha.